Consider the following 139-residue polypeptide: Large ribosomal subunit protein uL22 (139 aa).

A disordered region spans residues 1–22 (MVSENEKTRRPKRSIQHRQNKD). The segment covering 9–18 (RRPKRSIQHR) has biased composition (basic residues).

The protein belongs to the universal ribosomal protein uL22 family. In terms of assembly, part of the 50S ribosomal subunit.

This protein binds specifically to 23S rRNA; its binding is stimulated by other ribosomal proteins, e.g. L4, L17, and L20. It is important during the early stages of 50S assembly. It makes multiple contacts with different domains of the 23S rRNA in the assembled 50S subunit and ribosome. Functionally, the globular domain of the protein is located near the polypeptide exit tunnel on the outside of the subunit, while an extended beta-hairpin is found that lines the wall of the exit tunnel in the center of the 70S ribosome. This is Large ribosomal subunit protein uL22 from Pseudothermotoga lettingae (strain ATCC BAA-301 / DSM 14385 / NBRC 107922 / TMO) (Thermotoga lettingae).